The sequence spans 141 residues: Hemoglobin subunit alpha (141 aa).

The Globin domain occupies 1 to 141 (VLSPADKTNL…VSTVLTSKYR (141 aa)). S3 is subject to Phosphoserine. Position 7 is an N6-succinyllysine (K7). A Phosphothreonine modification is found at T8. At K11 the chain carries N6-succinyllysine. K16 is modified (N6-acetyllysine; alternate). The residue at position 16 (K16) is an N6-succinyllysine; alternate. Residue Y24 is modified to Phosphotyrosine. K40 bears the N6-succinyllysine mark. S49 carries the post-translational modification Phosphoserine. H58 contributes to the O2 binding site. Position 87 (H87) interacts with heme b. The residue at position 102 (S102) is a Phosphoserine. T108 is subject to Phosphothreonine. The residue at position 124 (S124) is a Phosphoserine. Phosphothreonine occurs at positions 134 and 137. Position 138 is a phosphoserine (S138).

The protein belongs to the globin family. In terms of assembly, heterotetramer of two alpha chains and two beta chains. Red blood cells.

Its function is as follows. Involved in oxygen transport from the lung to the various peripheral tissues. This is Hemoglobin subunit alpha from Tamias striatus (Eastern chipmunk).